We begin with the raw amino-acid sequence, 376 residues long: MSAKPTKINLLNFNRAGLREYFSSIGEKPFRADQMMKWIYQAGVSDFDQMTNLNKALREKLKAQCEVKAPEIAYQQGASDGTIKFALRLEGGQEVETVWIPDEDRATLCVSSQVGCALECTFCSTAQQGFNRNLSVSEIIGQVWRVATTIGLSNDSAKRPITNVVMMGMGEPLLNLKNVVPAMDLMLDDLAFGLSKRRVTLSTSGVVPALDMLGDQIDVALAISLHAPDDKLRDEIVPINKKYPIQEFLAGVRRYLAKSNANQGKVTVEYVMLNGINDSTDQAHELAKVLADTPCKINLIPFNPYPGSPYSRSSNSRIDRFAKVLSSYGLMVVVRKTRGDDIDAACGQLVGDVVDRTKRMLKKQMKGDEISVKMEH.

Glutamate 96 functions as the Proton acceptor in the catalytic mechanism. Residues 102-341 enclose the Radical SAM core domain; the sequence is DEDRATLCVS…VVVRKTRGDD (240 aa). Cysteine 109 and cysteine 346 are oxidised to a cystine. The [4Fe-4S] cluster site is built by cysteine 116, cysteine 120, and cysteine 123. S-adenosyl-L-methionine is bound by residues 170–171, serine 202, 224–226, and asparagine 303; these read GE and SLH. Catalysis depends on cysteine 346, which acts as the S-methylcysteine intermediate.

Belongs to the radical SAM superfamily. RlmN family. The cofactor is [4Fe-4S] cluster.

Its subcellular location is the cytoplasm. It carries out the reaction adenosine(2503) in 23S rRNA + 2 reduced [2Fe-2S]-[ferredoxin] + 2 S-adenosyl-L-methionine = 2-methyladenosine(2503) in 23S rRNA + 5'-deoxyadenosine + L-methionine + 2 oxidized [2Fe-2S]-[ferredoxin] + S-adenosyl-L-homocysteine. It catalyses the reaction adenosine(37) in tRNA + 2 reduced [2Fe-2S]-[ferredoxin] + 2 S-adenosyl-L-methionine = 2-methyladenosine(37) in tRNA + 5'-deoxyadenosine + L-methionine + 2 oxidized [2Fe-2S]-[ferredoxin] + S-adenosyl-L-homocysteine. Functionally, specifically methylates position 2 of adenine 2503 in 23S rRNA and position 2 of adenine 37 in tRNAs. m2A2503 modification seems to play a crucial role in the proofreading step occurring at the peptidyl transferase center and thus would serve to optimize ribosomal fidelity. This Pseudoalteromonas atlantica (strain T6c / ATCC BAA-1087) protein is Dual-specificity RNA methyltransferase RlmN.